Here is a 125-residue protein sequence, read N- to C-terminus: MEDFKQPKLSYGEIVQMKEEQDAFWSCYHEFLRRNEDVLGEMCRRHGRKLPAYPKLPTYAPIRWVLKTKAIYDVRVDECKSCSHEEISRRDYNPIKKEGLKDLYDSGNYRYQVYYSSSCNRDKSD.

It belongs to the nanovirus U2 protein family.

In Milk vetch dwarf virus (isolate N) (MDV), this protein is Protein U2 (DNA-U2).